Reading from the N-terminus, the 161-residue chain is Anaerobic nitrite reductase Glb1-2 (161 aa).

Residues 9 to 158 (AFTEEQEALV…LASAIIAEMK (150 aa)) enclose the Globin domain. The Homodimerization signature appears at 42–46 (EIAPP). Residues S52, K66, H70, K100, T104, and H105 each contribute to the heme b site. Positions 112 to 124 (PEHFEVTKQALLD) match the Homodimerization motif.

The protein belongs to the plant globin family. In terms of assembly, homodimer. The cofactor is heme b. In terms of tissue distribution, mainly expressed in root nodules and leaves, and, to a lower extent, in roots, stems, flowers and fruits. Accumulates in mature root nodules.

It catalyses the reaction Fe(III)-heme b-[protein] + nitric oxide + H2O = Fe(II)-heme b-[protein] + nitrite + 2 H(+). Phytoglobin that reduces nitrite to nitric oxide (NO) under anoxic conditions (e.g. during flooding or in waterlogged soil) and upon root nodulation. Required for general plant development and during nodulation, especially for the onset of symbiosis. Monitors nitric oxide (NO) levels during early phase of the nitrogen-fixing symbiosis and buffers oxygen in functioning nodules. Necessary for the production of pods. May not function as an oxygen storage or transport protein. Has an unusually high affinity for O(2) through a hexacoordinate heme iron because of a very low dissociation constant. In Lotus japonicus (Lotus corniculatus var. japonicus), this protein is Anaerobic nitrite reductase Glb1-2.